The primary structure comprises 647 residues: uncharacterized protein (647 aa).

The next 5 membrane-spanning stretches (helical) occupy residues 14-38 (LFPI…LAVW), 61-78 (VVAL…TTLF), 90-110 (LWLT…PAFI), 140-158 (LSAV…VIYW), and 178-195 (VIAL…RSSF).

The protein resides in the cell membrane. This is an uncharacterized protein from Haemophilus influenzae (strain ATCC 51907 / DSM 11121 / KW20 / Rd).